We begin with the raw amino-acid sequence, 229 residues long: Serine acetyltransferase (229 aa).

It belongs to the transferase hexapeptide repeat family.

It is found in the cytoplasm. It carries out the reaction L-serine + acetyl-CoA = O-acetyl-L-serine + CoA. Its pathway is amino-acid biosynthesis; L-cysteine biosynthesis; L-cysteine from L-serine: step 1/2. Catalyzes the acetylation of serine by acetyl-CoA to produce O-acetylserine (OAS). The polypeptide is Serine acetyltransferase (cysE) (Mycobacterium tuberculosis (strain ATCC 25618 / H37Rv)).